The following is a 465-amino-acid chain: Ras GTPase-activating protein-binding protein 1 (465 aa).

The NTF2 domain occupies 11–133 (VGREFVRQYY…FYVHNDIFRY (123 aa)). Glycyl lysine isopeptide (Lys-Gly) (interchain with G-Cter in ubiquitin) cross-links involve residues Lys36, Lys50, Lys59, Lys64, Lys76, and Lys123. The acidic disordered region stretch occupies residues 142–224 (ITEPQEESEE…EPVLEETAPE (83 aa)). Position 143 is a phosphothreonine (Thr143). 2 stretches are compositionally biased toward acidic residues: residues 145 to 157 (PQEE…EEPE) and 184 to 205 (EHLE…EQEP). Residues 145–242 (PQEESEEEVE…APADIAQTVQ (98 aa)) are disordered. Ser149 is modified (phosphoserine). Phosphoserine is present on residues Ser230, Ser231, Ser249, and Ser252. Positions 254 to 326 (TSKNLPPSGA…PVREAGEQGD (73 aa)) are disordered. 2 stretches are compositionally biased toward basic and acidic residues: residues 296-306 (PQRDQRVREQR) and 317-326 (PVREAGEQGD). Residues 339–414 (HQLFIGNLPH…VRLNVEEKKT (76 aa)) form the RRM domain. Glycyl lysine isopeptide (Lys-Gly) (interchain with G-Cter in ubiquitin) cross-links involve residues Lys352 and Lys356. Ser372 bears the Phosphoserine mark. Residue Lys375 forms a Glycyl lysine isopeptide (Lys-Gly) (interchain with G-Cter in ubiquitin) linkage. The residue at position 375 (Lys375) is an N6-acetyllysine; alternate. Residue Lys375 forms a Glycyl lysine isopeptide (Lys-Gly) (interchain with G-Cter in SUMO2); alternate linkage. Lys392 participates in a covalent cross-link: Glycyl lysine isopeptide (Lys-Gly) (interchain with G-Cter in ubiquitin); alternate. Residues 409–465 (VEEKKTRAAREGDRRDNRLRGPGGPRGGLGGGMRGPPRGGMVQKPGFGVGRSIAPRQ) form an RG-rich region region. Positions 412-427 (KKTRAAREGDRRDNRL) are enriched in basic and acidic residues. A disordered region spans residues 412 to 465 (KKTRAAREGDRRDNRLRGPGGPRGGLGGGMRGPPRGGMVQKPGFGVGRSIAPRQ). Residue Arg428 is modified to Asymmetric dimethylarginine. Over residues 429–446 (GPGGPRGGLGGGMRGPPR) the composition is skewed to gly residues. Arg434 is modified (asymmetric dimethylarginine; alternate). An omega-N-methylarginine; alternate mark is found at Arg434, Arg446, Arg459, and Arg464. At Arg459 the chain carries Dimethylated arginine; alternate.

As to quaternary structure, homodimer and oligomer. Component of a TAU mRNP complex, at least composed of IGF2BP1, ELAVL4 and G3BP1. Binds to the SH3 domain of Ras GTPase-activating protein (RASA1) in proliferating cells. No interaction in quiescent cells. Interacts (via NTF2 domain) with USP10; inhibiting stress granule formation by lowering G3BP1 valence. Interacts (via NTF2 domain) with CAPRIN1; promoting stress granule formation by lowering the saturation-concentration of G3BP1. Interacts (via NTF2 domain) with UBAP2L; promoting stress granule formation. Associates (via RG-rich region) with 40S ribosome subunits. Interacts with RPTOR and SPAG5; this complex is increased by oxidative stress. Interacts with ATXN2L. Interacts with STYXL1. Interacts with CGAS (via N-terminus); this interaction promotes the DNA-binding and activation of CGAS. Interacts (via C-terminus) with RIGI. Interacts with PABPC1. Interacts with QKI (isoforms QKI6 and QKI7); directing N(7)-methylguanine-containing mRNAs to stress granules. The cofactor is Mg(2+). Post-translationally, phosphorylation of the acidic disordered region regulates stress granule assembly. RASA1-dependent phosphorylation of Ser-149 induces a conformational change that prevents self-association. Dephosphorylation after HRAS activation is required for stress granule assembly. Ser-149 phosphorylation induces partial nuclear localization. Arg-435 is dimethylated, probably to asymmetric dimethylarginine. In terms of processing, ubiquitinated by TRIM21 via 'Lys-63'-linked polyubiquitination in the NTF2 domain in response to heat shock, leading to stress granule disassembly: ubiquitination promotes interaction with the FAF2 adapter, followed by interaction with VCP, which extracts G3BP1 from stress granules, leading to stress granule disassembly. In case of prolonged stress, ubiquitination by TRIM21 leads to autophagy-dependent degradation of G3BP1 via recruitment of ubiquitinated G3BP1 by SQSTM1 and/or CALCOCO2 to autophagosomes.

It is found in the cytoplasm. It localises to the cytosol. The protein resides in the perikaryon. Its subcellular location is the stress granule. The protein localises to the nucleus. It catalyses the reaction ATP + H2O = ADP + phosphate + H(+). Its activity is regulated as follows. Under physiological conditions, G3BP1 adopts a compact state that is stabilized by intramolecular interactions between the RG-rich and the acidic regions that inhibit phase separation. Upon stress, polysomes disassemble and mRNAs are released in an unfolded protein-free state. Binding of unfolded mRNA to G3BP1 outcompetes the intramolecular interactions and RNA-bound G3BP1 adopts an expanded conformation in which the RG-rich region becomes exposed to engage in protein-protein and protein-RNA interactions, allowing physical cross-linking of RNA molecules to form protein-RNA condensates, leading to liquid-liquid phase separation (LLPS). Its function is as follows. Protein involved in various processes, such as stress granule formation and innate immunity. Plays an essential role in stress granule formation. Stress granules are membraneless compartments that store mRNAs and proteins, such as stalled translation pre-initiation complexes, in response to stress. Promotes formation of stress granules phase-separated membraneless compartment by undergoing liquid-liquid phase separation (LLPS) upon unfolded RNA-binding: functions as a molecular switch that triggers RNA-dependent LLPS in response to a rise in intracellular free RNA concentrations. Also acts as an ATP- and magnesium-dependent helicase: unwinds DNA/DNA, RNA/DNA, and RNA/RNA substrates with comparable efficiency. Acts unidirectionally by moving in the 5' to 3' direction along the bound single-stranded DNA. Unwinds preferentially partial DNA and RNA duplexes having a 17 bp annealed portion and either a hanging 3' tail or hanging tails at both 5'- and 3'-ends. Plays an essential role in innate immunity by promoting CGAS and RIGI activity. Participates in the DNA-triggered cGAS/STING pathway by promoting the DNA binding and activation of CGAS. Triggers the condensation of cGAS, a process probably linked to the formation of membrane-less organelles. Also enhances RIGI-induced type I interferon production probably by helping RIGI at sensing pathogenic RNA. May also act as a phosphorylation-dependent sequence-specific endoribonuclease in vitro: Cleaves exclusively between cytosine and adenine and cleaves MYC mRNA preferentially at the 3'-UTR. The polypeptide is Ras GTPase-activating protein-binding protein 1 (G3BP1) (Bos taurus (Bovine)).